The primary structure comprises 200 residues: Acyl-homoserine-lactone synthase (200 aa).

The protein belongs to the autoinducer synthase family.

It carries out the reaction a fatty acyl-[ACP] + S-adenosyl-L-methionine = an N-acyl-L-homoserine lactone + S-methyl-5'-thioadenosine + holo-[ACP] + H(+). In terms of biological role, required for the synthesis of BHL (N-butanoyl-L-homoserine lactone). The chain is Acyl-homoserine-lactone synthase (swrI) from Serratia liquefaciens.